The following is a 536-amino-acid chain: Probable galacturonosyltransferase 10 (536 aa).

At 1 to 16 (MRRRGGDSFRRAGRRK) the chain is on the cytoplasmic side. Residues 17-37 (ISNVVWWVLSGIALLLFFLIL) traverse the membrane as a helical; Signal-anchor for type II membrane protein segment. Topologically, residues 38 to 536 (SKAGHIEPRP…SPFMQQCNFH (499 aa)) are lumenal. N-linked (GlcNAc...) asparagine glycosylation is found at N64, N246, N300, N403, and N436.

It belongs to the glycosyltransferase 8 family. In terms of tissue distribution, expressed in roots, inflorescences, siliques, leaves and stems.

It is found in the golgi apparatus membrane. It participates in glycan metabolism; pectin biosynthesis. Its function is as follows. May be involved in pectin and/or xylans biosynthesis in cell walls. The protein is Probable galacturonosyltransferase 10 (GAUT10) of Arabidopsis thaliana (Mouse-ear cress).